The primary structure comprises 451 residues: Protein NINJA homolog 1 (451 aa).

Disordered regions lie at residues 1–223 (MDDE…QGNP), 321–346 (ISQADDGKKTQEAGASSSALVEDDKK), and 427–451 (DAPGQENSATLPAFPVGNQAASAQN). Basic and acidic residues predominate over residues 23–35 (KARDAPLEPKAEP). 3 stretches are compositionally biased toward polar residues: residues 38-49 (EESSSKGVSQTP), 86-103 (PGSSSVPVADGSNEQKPV), and 143-153 (ISISTDDGSTG). A compositionally biased stretch (acidic residues) spans 154–163 (ENEDVAESEA). A compositionally biased stretch (low complexity) spans 207–216 (SFSGSESSSG).

Belongs to the Ninja family. In terms of assembly, interacts with TIFY10C/JAZ8. Interacts with TIFY11A/JAZ9.

It localises to the nucleus. The chain is Protein NINJA homolog 1 from Oryza sativa subsp. japonica (Rice).